A 750-amino-acid polypeptide reads, in one-letter code: Methylmalonyl-CoA mutase, mitochondrial (750 aa).

Residues 1–32 (MLRVKNQLFLLSPHYLKQVKESSGSRLIRQRF) constitute a mitochondrion transit peptide. Glutamine 50 provides a ligand contact to malonyl-CoA. Position 89 is an N6-acetyllysine (lysine 89). Malonyl-CoA is bound by residues 96–99 (YPTM) and 106–110 (TIRQY). N6-acetyllysine is present on lysine 212. Malonyl-CoA contacts are provided by residues 216-218 (TIQ), arginine 228, lysine 255, histidine 265, and 304-306 (RLS). N6-acetyllysine is present on lysine 335. The residue at position 343 (lysine 343) is an N6-succinyllysine. Phosphoserine is present on serine 481. Lysine 595 carries the post-translational modification N6-succinyllysine. Lysine 602 carries the N6-acetyllysine modification. The B12-binding domain maps to 614 to 746 (RPRLLVAKMG…DDIEKCLEKK (133 aa)). Adenosylcob(III)alamin is bound at residue histidine 627.

Belongs to the methylmalonyl-CoA mutase family. In terms of assembly, homodimer. Interacts (the apoenzyme form) with MMAA; the interaction is GTP dependent. It depends on adenosylcob(III)alamin as a cofactor.

Its subcellular location is the mitochondrion matrix. The protein localises to the mitochondrion. It localises to the cytoplasm. It carries out the reaction (R)-methylmalonyl-CoA = succinyl-CoA. Inhibited by itaconyl-CoA, a metabolite that inactivates the coenzyme B12 cofactor. Functionally, catalyzes the reversible isomerization of methylmalonyl-CoA (MMCoA) (generated from branched-chain amino acid metabolism and degradation of dietary odd chain fatty acids and cholesterol) to succinyl-CoA (3-carboxypropionyl-CoA), a key intermediate of the tricarboxylic acid cycle. The sequence is that of Methylmalonyl-CoA mutase, mitochondrial (MMUT) from Macaca fascicularis (Crab-eating macaque).